Reading from the N-terminus, the 216-residue chain is Large ribosomal subunit protein uL1z (216 aa).

The protein belongs to the universal ribosomal protein uL1 family. Interacts with the GTPase NUG2.

The protein is Large ribosomal subunit protein uL1z (RPL10AA) of Arabidopsis thaliana (Mouse-ear cress).